Reading from the N-terminus, the 391-residue chain is Chalcone synthase (391 aa).

Cysteine 164 is an active-site residue.

This sequence belongs to the thiolase-like superfamily. Chalcone/stilbene synthases family.

The enzyme catalyses (E)-4-coumaroyl-CoA + 3 malonyl-CoA + 3 H(+) = 2',4,4',6'-tetrahydroxychalcone + 3 CO2 + 4 CoA. The protein operates within secondary metabolite biosynthesis; flavonoid biosynthesis. Functionally, the primary product of this enzyme is 4,2',4',6'-tetrahydroxychalcone (also termed naringenin-chalcone or chalcone) which can under specific conditions spontaneously isomerize into naringenin. This chain is Chalcone synthase (CHS), found in Dianthus monspessulanus.